The primary structure comprises 373 residues: Phospho-N-acetylmuramoyl-pentapeptide-transferase (373 aa).

11 helical membrane passes run 16–36, 46–66, 93–113, 120–140, 157–177, 185–205, 216–236, 242–262, 270–290, 298–318, and 350–369; these read WWTKGSTSASLLGIVIFAASF, LLSLPLMISTLISVLIASWGI, PTMGGLLVVPVGLIIGSFVSV, QLLALSWITLAYMLIGGFDDW, LLLQTAASLIFLAWAGWQHWI, LGISIQMGFMIWPLALFVFLA, LDGLASGCGALVFTGLAVQLM, GNPVLAGFCMAMAGAWLGFLM, VFMGDTGSLAMGAALSGVAIL, LVMGGVFLAESLSVIIQVWVF, and MVVRRFWLSTGGLVLLGLLL.

Belongs to the glycosyltransferase 4 family. MraY subfamily. Requires Mg(2+) as cofactor.

Its subcellular location is the cell inner membrane. It carries out the reaction UDP-N-acetyl-alpha-D-muramoyl-L-alanyl-gamma-D-glutamyl-meso-2,6-diaminopimeloyl-D-alanyl-D-alanine + di-trans,octa-cis-undecaprenyl phosphate = di-trans,octa-cis-undecaprenyl diphospho-N-acetyl-alpha-D-muramoyl-L-alanyl-D-glutamyl-meso-2,6-diaminopimeloyl-D-alanyl-D-alanine + UMP. It functions in the pathway cell wall biogenesis; peptidoglycan biosynthesis. Catalyzes the initial step of the lipid cycle reactions in the biosynthesis of the cell wall peptidoglycan: transfers peptidoglycan precursor phospho-MurNAc-pentapeptide from UDP-MurNAc-pentapeptide onto the lipid carrier undecaprenyl phosphate, yielding undecaprenyl-pyrophosphoryl-MurNAc-pentapeptide, known as lipid I. This Prochlorococcus marinus (strain MIT 9313) protein is Phospho-N-acetylmuramoyl-pentapeptide-transferase.